Here is a 247-residue protein sequence, read N- to C-terminus: MNIAHTIFGVFGNATALFLFLAPSITFKRIIKNKSTEQFSGIPYPMTLLNCLLSAWYGLPFVSKDNTLVSTINGTGAVIETVYVLIFLFYAPKKEKIKIFGIFSCVLAVFATVALVSLFALQGNGRKLFCGLAATVFSIIMYASPLSIMRLVVKTKSVEFMPFFLSLFVFLCGTSWFVYGLIGRDPFVAIPNGFGCALGTLQLILYFIYCGNKGEKSADAQKDEKSVEMKDDEKKQNVVNGKQDLQV.

At 1–6 the chain is on the extracellular side; that stretch reads MNIAHT. Residues 7 to 27 traverse the membrane as a helical segment; sequence IFGVFGNATALFLFLAPSITF. Residues 7–94 enclose the MtN3/slv 1 domain; it reads IFGVFGNATA…LIFLFYAPKK (88 aa). The Cytoplasmic segment spans residues 28-41; it reads KRIIKNKSTEQFSG. Residues 42-62 form a helical membrane-spanning segment; sequence IPYPMTLLNCLLSAWYGLPFV. Over 63-71 the chain is Extracellular; that stretch reads SKDNTLVST. Residues 72 to 92 traverse the membrane as a helical segment; sequence INGTGAVIETVYVLIFLFYAP. Over 93-98 the chain is Cytoplasmic; the sequence is KKEKIK. Residues 99–119 form a helical membrane-spanning segment; the sequence is IFGIFSCVLAVFATVALVSLF. The Extracellular portion of the chain corresponds to 120-127; sequence ALQGNGRK. The helical transmembrane segment at 128–148 threads the bilayer; sequence LFCGLAATVFSIIMYASPLSI. The 84-residue stretch at 130 to 213 folds into the MtN3/slv 2 domain; sequence CGLAATVFSI…ILYFIYCGNK (84 aa). Residues 149–162 are Cytoplasmic-facing; it reads MRLVVKTKSVEFMP. Residues 163–183 form a helical membrane-spanning segment; the sequence is FFLSLFVFLCGTSWFVYGLIG. Over 184-187 the chain is Extracellular; it reads RDPF. A helical membrane pass occupies residues 188–208; it reads VAIPNGFGCALGTLQLILYFI. At 209–247 the chain is on the cytoplasmic side; the sequence is YCGNKGEKSADAQKDEKSVEMKDDEKKQNVVNGKQDLQV. Positions 221–236 are enriched in basic and acidic residues; sequence QKDEKSVEMKDDEKKQ. Residues 221-247 form a disordered region; that stretch reads QKDEKSVEMKDDEKKQNVVNGKQDLQV. Residues 237 to 247 are compositionally biased toward polar residues; that stretch reads NVVNGKQDLQV.

Belongs to the SWEET sugar transporter family. As to quaternary structure, forms homooligomers and heterooligomers with SWEET9, SWEET11, SWEET13, SWEET15, SWEET16 and SWEET17. As to expression, mainly expressed in flowers.

It localises to the cell membrane. The protein resides in the endoplasmic reticulum membrane. Functionally, mediates both low-affinity uptake and efflux of sugar across the plasma membrane. Can transport glucose, and, to a lower extent, mannose, fructose and galactose. This is Bidirectional sugar transporter SWEET1 from Arabidopsis thaliana (Mouse-ear cress).